A 578-amino-acid polypeptide reads, in one-letter code: Frizzled-2 (578 aa).

Residues 1–17 form the signal peptide; sequence MLLRISVLFLLLGSCGA. Topologically, residues 18-236 are extracellular; it reads LFGKRQKCEQ…AESHSLVSNW (219 aa). Positions 20–144 constitute an FZ domain; that stretch reads GKRQKCEQIT…MSTGNICAAP (125 aa). Intrachain disulfides connect cysteine 25–cysteine 86, cysteine 33–cysteine 79, cysteine 70–cysteine 108, cysteine 97–cysteine 141, and cysteine 101–cysteine 125. Asparagine 39 is a glycosylation site (N-linked (GlcNAc...) asparagine). The disordered stretch occupies residues 138–175; that stretch reads GNICAAPPDTPKKQHKGHHHKNQNQNQNQNHNYSPDGP. The segment covering 150–159 has biased composition (basic residues); that stretch reads KQHKGHHHKN. The span at 160–169 shows a compositional bias: low complexity; that stretch reads QNQNQNQNHN. A glycan (N-linked (GlcNAc...) asparagine) is linked at asparagine 213. A helical membrane pass occupies residues 237–257; that stretch reads MAFWSITCCVLASFTFLTFLI. Topologically, residues 258-268 are cytoplasmic; the sequence is ETDRFQYPERP. The helical transmembrane segment at 269–289 threads the bilayer; sequence IFMLAFCQLMVAVGFMIRYFV. Residues 290–312 lie on the Extracellular side of the membrane; sequence GHEEIACDSMRIKGADDNSGSLC. Residues 313 to 333 form a helical membrane-spanning segment; the sequence is FVVFLLTYFFGMAASVWWVIL. At 334 to 354 the chain is on the cytoplasmic side; it reads SLTWVLSAASKWSPEAISSFS. A helical membrane pass occupies residues 355–375; it reads FHFHVVGWCLPAIQTVLVIVF. Residues 376-398 are Extracellular-facing; the sequence is NAIDGDPITGICYVGNTDLQFQR. Residues 399–419 traverse the membrane as a helical segment; sequence IFVLFPLLVYFIVGVLFLVIG. Over 420-449 the chain is Cytoplasmic; the sequence is FCNLWSIRNEVQKQHPSLESAHKITQLMSK. Residues 450–470 traverse the membrane as a helical segment; the sequence is IGIFSLLYTIPSLLIICVLFY. Residues 471–497 are Extracellular-facing; that stretch reads EQNHRSLWEQSQLCSCSPKQTIGDSSL. Residues 498-518 traverse the membrane as a helical segment; sequence IISLIKTCCMCILGWTSGFWV. The Cytoplasmic portion of the chain corresponds to 519–578; that stretch reads CSTKTLSSWKNAICCLGSSRSLPKYQPADILYAKSDMSSSQFYNTSLRHNHLYGGIPDKL. The Lys-Thr-X-X-X-Trp motif, mediates interaction with the PDZ domain of Dvl family members signature appears at 522–527; the sequence is KTLSSW. A PDZ-binding motif is present at residues 556–558; that stretch reads SSS.

Belongs to the G-protein coupled receptor Fz/Smo family. As to expression, expressed in two pairs of head neurons and throughout the pharynx.

The protein resides in the cell membrane. Receptor for Wnt proteins. Most frizzled receptors are coupled to the beta-catenin canonical signaling pathway, which leads to the activation of disheveled proteins, inhibition of gsk-3 kinase, nuclear accumulation of beta-catenin and activation of Wnt target genes. A second signaling pathway involving PKC and calcium fluxes has been seen for some family members, but it is not yet clear if it represents a distinct pathway or if it can be integrated in the canonical pathway, as PKC seems to be required for Wnt-mediated inactivation of gsk-3 kinase. Both pathways seem to involve interactions with G-proteins. Required for the migration and axon formation and guidance of different neuronal cell types including canal-associated neurons (CAN), hermaphrodite-specific neurons (HSN), anterior lateral microtubule neurons (ALM), and the right Q neuroblast (QR) and its descendants. Directs ALM migration through frizzled protein mom-5 and Wnt ligands cwn-1, cwn-2 and egl-20. May act redundantly with mom-5 to direct CAN migration. Plays a role in the organization of head ganglion cells. Probably by acting as a receptor for Wnt ligand cwn-2, plays a role in the positioning of the nerve ring and may in addition positively regulate the neurite outgrowth of RME GABAergic motor neurons along the anterior-posterior axis of the body. The sequence is that of Frizzled-2 from Caenorhabditis elegans.